A 420-amino-acid polypeptide reads, in one-letter code: 3-isopropylmalate dehydratase large subunit (420 aa).

[4Fe-4S] cluster contacts are provided by C301, C361, and C364.

It belongs to the aconitase/IPM isomerase family. LeuC type 2 subfamily. In terms of assembly, heterodimer of LeuC and LeuD. [4Fe-4S] cluster serves as cofactor.

It carries out the reaction (2R,3S)-3-isopropylmalate = (2S)-2-isopropylmalate. The protein operates within amino-acid biosynthesis; L-leucine biosynthesis; L-leucine from 3-methyl-2-oxobutanoate: step 2/4. In terms of biological role, catalyzes the isomerization between 2-isopropylmalate and 3-isopropylmalate, via the formation of 2-isopropylmaleate. The protein is 3-isopropylmalate dehydratase large subunit of Desulfovibrio desulfuricans (strain ATCC 27774 / DSM 6949 / MB).